A 188-amino-acid chain; its full sequence is Ribosome-recycling factor (188 aa).

It belongs to the RRF family.

The protein localises to the cytoplasm. Responsible for the release of ribosomes from messenger RNA at the termination of protein biosynthesis. May increase the efficiency of translation by recycling ribosomes from one round of translation to another. The sequence is that of Ribosome-recycling factor from Lawsonia intracellularis (strain PHE/MN1-00).